A 156-amino-acid polypeptide reads, in one-letter code: Biotin carboxyl carrier protein of acetyl-CoA carboxylase (156 aa).

The region spanning 80–156 (GNVVRSPMVG…EFDQPLFTIV (77 aa)) is the Biotinyl-binding domain. The residue at position 122 (lysine 122) is an N6-biotinyllysine.

As to quaternary structure, homodimer.

It functions in the pathway lipid metabolism; fatty acid biosynthesis. Functionally, this protein is a component of the acetyl coenzyme A carboxylase complex; first, biotin carboxylase catalyzes the carboxylation of the carrier protein and then the transcarboxylase transfers the carboxyl group to form malonyl-CoA. The chain is Biotin carboxyl carrier protein of acetyl-CoA carboxylase (accB) from Pseudomonas aeruginosa (strain ATCC 15692 / DSM 22644 / CIP 104116 / JCM 14847 / LMG 12228 / 1C / PRS 101 / PAO1).